The following is a 525-amino-acid chain: Delta(24)-sterol reductase homolog dhcr-24 (525 aa).

2 helical membrane-spanning segments follow: residues 27–47 (WVFV…VFDF) and 214–234 (SLFF…AATI). Residues 47–239 (FRNRIVHAVN…VAATIKIIPC (193 aa)) enclose the FAD-binding PCMH-type domain.

It belongs to the FAD-binding oxidoreductase/transferase type 4 family. FAD serves as cofactor.

The protein resides in the endoplasmic reticulum membrane. Its subcellular location is the golgi apparatus membrane. It catalyses the reaction cholesterol + NADP(+) = desmosterol + NADPH + H(+). It carries out the reaction lanosterol + NADPH + H(+) = 24,25-dihydrolanosterol + NADP(+). The enzyme catalyses 5alpha-cholest-8-en-3beta-ol + NADP(+) = zymosterol + NADPH + H(+). It functions in the pathway steroid biosynthesis; cholesterol biosynthesis. Functionally, catalyzes the reduction of the delta-24 double bond of sterol intermediates during cholesterol biosynthesis. The chain is Delta(24)-sterol reductase homolog dhcr-24 from Caenorhabditis elegans.